Here is a 298-residue protein sequence, read N- to C-terminus: Probable GTP 3',8-cyclase (298 aa).

Positions 4–227 constitute a Radical SAM core domain; that stretch reads RYGREIRSFR…MQNRKKYVID (224 aa). Residue arginine 13 coordinates GTP. [4Fe-4S] cluster-binding residues include cysteine 20 and cysteine 24. Position 26 (tyrosine 26) interacts with S-adenosyl-L-methionine. A [4Fe-4S] cluster-binding site is contributed by cysteine 27. Residue lysine 61 coordinates GTP. Glycine 65 provides a ligand contact to S-adenosyl-L-methionine. Threonine 91 contacts GTP. Serine 115 lines the S-adenosyl-L-methionine pocket. Lysine 152 is a binding site for GTP. Residues cysteine 243 and cysteine 246 each coordinate [4Fe-4S] cluster. 248–250 lines the GTP pocket; the sequence is RIR. A [4Fe-4S] cluster-binding site is contributed by cysteine 260.

Belongs to the radical SAM superfamily. MoaA family. [4Fe-4S] cluster is required as a cofactor.

It catalyses the reaction GTP + AH2 + S-adenosyl-L-methionine = (8S)-3',8-cyclo-7,8-dihydroguanosine 5'-triphosphate + 5'-deoxyadenosine + L-methionine + A + H(+). It participates in cofactor biosynthesis; molybdopterin biosynthesis. Catalyzes the cyclization of GTP to (8S)-3',8-cyclo-7,8-dihydroguanosine 5'-triphosphate. This chain is Probable GTP 3',8-cyclase, found in Methanococcus maripaludis (strain C6 / ATCC BAA-1332).